Consider the following 258-residue polypeptide: NAD kinase (258 aa).

The Proton acceptor role is filled by aspartate 51. NAD(+) is bound by residues 51–52 (DG), lysine 56, 119–120 (ND), lysine 130, aspartate 149, 160–165 (TAYSLS), and alanine 184.

It belongs to the NAD kinase family. The cofactor is a divalent metal cation.

It is found in the cytoplasm. It catalyses the reaction NAD(+) + ATP = ADP + NADP(+) + H(+). Functionally, involved in the regulation of the intracellular balance of NAD and NADP, and is a key enzyme in the biosynthesis of NADP. Catalyzes specifically the phosphorylation on 2'-hydroxyl of the adenosine moiety of NAD to yield NADP. This Thermotoga petrophila (strain ATCC BAA-488 / DSM 13995 / JCM 10881 / RKU-1) protein is NAD kinase.